The chain runs to 310 residues: Phosphoribosylaminoimidazole-succinocarboxamide synthase (310 aa).

This sequence belongs to the SAICAR synthetase family.

It carries out the reaction 5-amino-1-(5-phospho-D-ribosyl)imidazole-4-carboxylate + L-aspartate + ATP = (2S)-2-[5-amino-1-(5-phospho-beta-D-ribosyl)imidazole-4-carboxamido]succinate + ADP + phosphate + 2 H(+). It participates in purine metabolism; IMP biosynthesis via de novo pathway; 5-amino-1-(5-phospho-D-ribosyl)imidazole-4-carboxamide from 5-amino-1-(5-phospho-D-ribosyl)imidazole-4-carboxylate: step 1/2. This chain is Phosphoribosylaminoimidazole-succinocarboxamide synthase, found in Xanthomonas oryzae pv. oryzae (strain MAFF 311018).